The following is an 87-amino-acid chain: Small archaeal modifier protein 1 (87 aa).

At glycine 87 the chain carries 1-thioglycine; alternate. Glycine 87 carries the post-translational modification Glycyl adenylate; alternate. A Glycyl lysine isopeptide (Gly-Lys) (interchain with K-? in acceptor proteins); alternate cross-link involves residue glycine 87.

In terms of processing, the C-terminal glycine is likely acyl-adenylated (-COAMP) by UbaA, and also probably thiocarboxylated (-COSH) to function in sulfur transfer.

Functions as a protein modifier covalently attached to lysine residues of substrate proteins, as well as a sulfur carrier in molybdenum cofactor (MoCo) biosynthesis. The protein modification process is termed sampylation and involves the formation of an isopeptide bond between the SAMP1 C-terminal glycine carboxylate and the epsilon-amino group of lysine residues on target proteins. May serve as a proteolytic signal in the cell to target proteins for degradation by proteasomes. The protein is Small archaeal modifier protein 1 (samp1) of Haloferax volcanii (strain ATCC 29605 / DSM 3757 / JCM 8879 / NBRC 14742 / NCIMB 2012 / VKM B-1768 / DS2) (Halobacterium volcanii).